The following is a 168-amino-acid chain: Phosphopantetheine adenylyltransferase (168 aa).

A substrate-binding site is contributed by Thr-13. Residues 13–14 (TF) and His-21 each bind ATP. Positions 45, 78, and 92 each coordinate substrate. Residues 93-95 (GLR), Glu-103, and 128-134 (TQFISSS) contribute to the ATP site.

It belongs to the bacterial CoaD family. In terms of assembly, homohexamer. Requires Mg(2+) as cofactor.

Its subcellular location is the cytoplasm. The enzyme catalyses (R)-4'-phosphopantetheine + ATP + H(+) = 3'-dephospho-CoA + diphosphate. The protein operates within cofactor biosynthesis; coenzyme A biosynthesis; CoA from (R)-pantothenate: step 4/5. Functionally, reversibly transfers an adenylyl group from ATP to 4'-phosphopantetheine, yielding dephospho-CoA (dPCoA) and pyrophosphate. This is Phosphopantetheine adenylyltransferase from Wolbachia pipientis wMel.